Consider the following 946-residue polypeptide: MIGALARKLFGSANDRRVKGYQTRVAAINALEPEVAALSDEALRARTAEFRAELAAGKTLDDLLVPAFATVREAAKRTLGQRHFDVQLIGGMVLHEGDIAEMKTGEGKTLVATLAVYLNALAGKGVHVVTVNDYLAKRDSGWMGQIYGFLGMTTGVIVHGLDDAQRQAAYACDITYGTNNEYGFDYLRDNMKYRLEDMVQRGHNFAIVDEVDSILIDEARTPLIISGPLDDRSDFYNTIDTFIPRLDKSDYDVDEKQRTVTLTEAGMEKIETLLRDAGQLRGESLYDVENVSVVHHVNQALRAHALFQRDKDYIVRNDEVVIIDEFTGRMMQGRRYSEGLHQALEAKEHVTVQPENQTLASITFQNYFRMYDKLAGMTGTASTEADEFFDIYKLEVVEIPTNLPIARLDEDDEVYRTQQEKYAAILAEVERANKRMQPVLVGTASIEKSEVLAEYLKKNGYKQIDFTDPKGMDKLYAAARAGKPAKLFAVLNARFHEQEAYIVAEAGVPGAITIATNMAGRGTDIKLGGSLEMRIQQEAAHITDEAERAAKITEIKADIERFRDIVLKAEDEIEIEPAKGNKPAKTAKRPGGLYIIGSERHESRRIDNQLRGRSGRQGDPGRSKFFLSLEDDLMRIFGSDKLDTMLTRLGLKEGEAIIHPWINKALEKAQQKVEARNFDIRKNLLKFDDVQNDQRKVIFDQRIELMKEDSVAETVTDMRHTYIEDLVAKYVPEHAYAEQWDVAGLKAEVERVVGLDIPVDEWAKEEGIADEELITRLERVFDEHMAAKVGQWGSDVMRYAEKSILLQTLDHLWREHLVMLDHLRQVIGLRGYGQRDPLQEYKSEAFNLFQEMSSHLREAVTAQLMRVEIIPPDQPQELPPMEVHKMDPDTGQDEMALANVTLAPAQTTDKADRDPNKPETWGKVGRNEDCPCGSGKKYKHCHGRYA.

ATP contacts are provided by residues Gln87, Gly105–Thr109, and Asp524. Residues Pro904 to Gly933 form a disordered region. Zn(2+)-binding residues include Cys930, Cys932, Cys941, and His942.

It belongs to the SecA family. Monomer and homodimer. Part of the essential Sec protein translocation apparatus which comprises SecA, SecYEG and auxiliary proteins SecDF-YajC and YidC. Zn(2+) is required as a cofactor.

It localises to the cell inner membrane. The protein localises to the cytoplasm. The catalysed reaction is ATP + H2O + cellular proteinSide 1 = ADP + phosphate + cellular proteinSide 2.. In terms of biological role, part of the Sec protein translocase complex. Interacts with the SecYEG preprotein conducting channel. Has a central role in coupling the hydrolysis of ATP to the transfer of proteins into and across the cell membrane, serving both as a receptor for the preprotein-SecB complex and as an ATP-driven molecular motor driving the stepwise translocation of polypeptide chains across the membrane. The chain is Protein translocase subunit SecA from Rhodopseudomonas palustris (strain TIE-1).